The chain runs to 80 residues: Small ribosomal subunit protein bS18 (80 aa).

The protein belongs to the bacterial ribosomal protein bS18 family. As to quaternary structure, part of the 30S ribosomal subunit. Forms a tight heterodimer with protein bS6.

Its function is as follows. Binds as a heterodimer with protein bS6 to the central domain of the 16S rRNA, where it helps stabilize the platform of the 30S subunit. The polypeptide is Small ribosomal subunit protein bS18 (Staphylococcus epidermidis (strain ATCC 35984 / DSM 28319 / BCRC 17069 / CCUG 31568 / BM 3577 / RP62A)).